The primary structure comprises 294 residues: Nucleotide-binding protein LVIS_0651 (294 aa).

12–19 (GMSGAGKT) contributes to the ATP binding site. Residue 62–65 (DLRS) coordinates GTP.

It belongs to the RapZ-like family.

Functionally, displays ATPase and GTPase activities. The chain is Nucleotide-binding protein LVIS_0651 from Levilactobacillus brevis (strain ATCC 367 / BCRC 12310 / CIP 105137 / JCM 1170 / LMG 11437 / NCIMB 947 / NCTC 947) (Lactobacillus brevis).